The sequence spans 559 residues: MSPTILSFSGVTVPAMPSSGSLSGNTYLRLIDTQCSTMRELKQIHASLIKTGLISDTVTASRVLAFCCASPSDMNYAYLVFTRINHKNPFVWNTIIRGFSRSSFPEMAISIFIDMLCSSPSVKPQRLTYPSVFKAYGRLGQARDGRQLHGMVIKEGLEDDSFIRNTMLHMYVTCGCLIEAWRIFLGMIGFDVVAWNSMIMGFAKCGLIDQAQNLFDEMPQRNGVSWNSMISGFVRNGRFKDALDMFREMQEKDVKPDGFTMVSLLNACAYLGASEQGRWIHEYIVRNRFELNSIVVTALIDMYCKCGCIEEGLNVFECAPKKQLSCWNSMILGLANNGFEERAMDLFSELERSGLEPDSVSFIGVLTACAHSGEVHRADEFFRLMKEKYMIEPSIKHYTLMVNVLGGAGLLEEAEALIKNMPVEEDTVIWSSLLSACRKIGNVEMAKRAAKCLKKLDPDETCGYVLLSNAYASYGLFEEAVEQRLLMKERQMEKEVGCSSIEVDFEVHEFISCGGTHPKSAEIYSLLDILNWDVSTIKSGFAELFDATTRIGFTYLAEK.

Residues 1-14 (MSPTILSFSGVTVP) constitute a chloroplast transit peptide. PPR repeat units follow at residues 88-122 (NPFV…SPSV), 125-159 (QRLT…GLED), 160-190 (DSFI…MIGF), 191-221 (DVVA…MPQR), 222-256 (NGVS…DVKP), 257-291 (DGFT…RFEL), 292-322 (NSIV…APKK), 323-357 (QLSC…GLEP), 358-388 (DSVS…MKEK), and 394-424 (SIKH…MPVE). The tract at residues 429–504 (IWSSLLSACR…EVGCSSIEVD (76 aa)) is type E motif. The interval 505–535 (FEVHEFISCGGTHPKSAEIYSLLDILNWDVS) is type E(+) motif.

It belongs to the PPR family. PCMP-E subfamily.

The protein resides in the plastid. The protein localises to the chloroplast. In Arabidopsis thaliana (Mouse-ear cress), this protein is Pentatricopeptide repeat-containing protein At2g42920, chloroplastic (PCMP-E75).